A 230-amino-acid chain; its full sequence is L-aspartate/glutamate-specific racemase (230 aa).

Substrate is bound by residues Met-10, Gln-52, and 83-85; that span reads TNT. Thr-83 serves as the catalytic Proton donor. Cys-197 acts as the Proton acceptor in catalysis. 198 to 199 provides a ligand contact to substrate; that stretch reads TE.

Belongs to the aspartate/glutamate racemases family. As to quaternary structure, homodimer.

The enzyme catalyses L-glutamate = D-glutamate. It catalyses the reaction L-aspartate = D-aspartate. In terms of biological role, exhibits racemase activity for both L-glutamate and L-aspartate. This Escherichia coli O157:H7 protein is L-aspartate/glutamate-specific racemase.